The sequence spans 348 residues: L-threonine 3-dehydrogenase (348 aa).

Cys-42 provides a ligand contact to Zn(2+). Residues Thr-44 and His-47 each act as charge relay system in the active site. Zn(2+) is bound by residues His-67, Glu-68, Cys-97, Cys-100, Cys-103, and Cys-111. NAD(+) contacts are provided by residues Leu-179, Glu-199, Arg-204, 266-268, and 291-292; these read LGL and IT.

Belongs to the zinc-containing alcohol dehydrogenase family. As to quaternary structure, homodimer. Homotetramer; dimer of dimers. Zn(2+) serves as cofactor.

Its subcellular location is the cytoplasm. The catalysed reaction is L-threonine + NAD(+) = (2S)-2-amino-3-oxobutanoate + NADH + H(+). It functions in the pathway amino-acid degradation; L-threonine degradation via oxydo-reductase pathway; glycine from L-threonine: step 1/2. Is totally inhibited by EDTA in vitro. Its function is as follows. Catalyzes the NAD(+)-dependent oxidation of L-threonine to 2-amino-3-ketobutyrate. Is much less efficient when using NADP(+) instead of NAD(+). To a lesser extent, also catalyzes the oxidation of L-serine and DL-threo-3-phenylserine, but not that of L-allo-threonine, D-threonine and D-allo-threonine and many other L-amino acids. This Pyrococcus horikoshii (strain ATCC 700860 / DSM 12428 / JCM 9974 / NBRC 100139 / OT-3) protein is L-threonine 3-dehydrogenase.